We begin with the raw amino-acid sequence, 429 residues long: D-amino acid dehydrogenase (429 aa).

3-17 serves as a coordination point for FAD; it reads VVVLGSGVVGVTSAY.

The protein belongs to the DadA oxidoreductase family. FAD is required as a cofactor.

The catalysed reaction is a D-alpha-amino acid + A + H2O = a 2-oxocarboxylate + AH2 + NH4(+). Its pathway is amino-acid degradation; D-alanine degradation; NH(3) and pyruvate from D-alanine: step 1/1. Functionally, oxidative deamination of D-amino acids. The polypeptide is D-amino acid dehydrogenase (Paraburkholderia xenovorans (strain LB400)).